An 851-amino-acid chain; its full sequence is Protein NUD1 (851 aa).

Disordered regions lie at residues 1–31 (MDMD…NAHS) and 216–352 (LVGS…KAPS). Residues 8 to 21 (AELSSQLENLTINS) show a composition bias toward polar residues. Low complexity-rich tracts occupy residues 223–246 (NSNN…INNK) and 260–278 (SNSF…QTQS). Over residues 291–304 (NTISPGQLGYQFNH) the composition is skewed to polar residues. The span at 320–333 (SSSHSLDNTSSNQS) shows a compositional bias: low complexity. Residue lysine 357 forms a Glycyl lysine isopeptide (Lys-Gly) (interchain with G-Cter in ubiquitin) linkage. A phosphothreonine mark is found at threonine 388 and threonine 392. Residues serine 417 and serine 419 each carry the phosphoserine modification. LRR repeat units lie at residues 544 to 566 (DLEC…SLCH), 567 to 588 (HLQE…GSSR), 589 to 609 (MKKL…EQLI), 621 to 642 (TVEV…NCLP), and 643 to 664 (RLKV…SKME).

As to quaternary structure, interacts directly with MPC54, CNM67, SPO21/MPC70, ADY3 and ADY4. Probable component of a spindle pole boby (SPB) complex composed of ADY3, SSP1, DON1, MPC54, SPO21/MPC70, NUD1 and CNM67. In terms of processing, phosphorylated from S/G2 phase until the end of mitosis.

The protein resides in the cytoplasm. It localises to the cytoskeleton. It is found in the microtubule organizing center. The protein localises to the spindle pole body. Its subcellular location is the nucleus envelope. Functionally, involved in astral microtubule organization by binding SCP72 to the outer plaque in a cell-cycle dependent manner. Required for the mitotic exit by facilitating the binding of TEMP1 to CDC15. Also involved in the pathway that organizes the shaping and sizing of the prospore membrane (PSM) during sporulation. This is Protein NUD1 (NUD1) from Saccharomyces cerevisiae (strain ATCC 204508 / S288c) (Baker's yeast).